The following is a 112-amino-acid chain: ATP synthase epsilon chain (112 aa).

The protein belongs to the ATPase epsilon chain family. In terms of assembly, F-type ATPases have 2 components, CF(1) - the catalytic core - and CF(0) - the membrane proton channel. CF(1) has five subunits: alpha(3), beta(3), gamma(1), delta(1), epsilon(1). CF(0) has three main subunits: a, b and c.

The protein resides in the cell inner membrane. Functionally, produces ATP from ADP in the presence of a proton gradient across the membrane. The polypeptide is ATP synthase epsilon chain (Rickettsia felis (strain ATCC VR-1525 / URRWXCal2) (Rickettsia azadi)).